The following is a 1224-amino-acid chain: Coatomer subunit alpha (1224 aa).

WD repeat units lie at residues 3–38 (TKFE…LWDY), 42–80 (TLID…VWNY), 84–122 (RCLF…VWNW), and 126–164 (TCVC…VWDI). Residue Ser-173 is modified to Phosphoserine. Thr-185 is subject to Phosphothreonine. WD repeat units lie at residues 195-234 (AVVK…IWRM), 241-278 (EVDT…VWDM), and 282-319 (TGVQ…VFKL). Position 402 is a phosphoserine (Ser-402). Thr-591 is modified (phosphothreonine). A Phosphoserine modification is found at Ser-895. Arg-965 is subject to Omega-N-methylarginine. Ser-1193 is subject to Phosphoserine.

In terms of assembly, oligomeric complex that consists of at least the alpha, beta, beta', gamma, delta, epsilon and zeta subunits. Interacts with SCYL1. Interacts with JAGN1. Interacts with TMEM41B. Interacts with SVEP1. Probably interacts with PEX11A. In terms of tissue distribution, uniformly expressed in a wide range of adult and fetal tissues. Xenin is found in gastric, duodenal and jejunal mucosa. Circulates in the blood. Seems to be confined to specific endocrine cells.

The protein localises to the cytoplasm. Its subcellular location is the golgi apparatus membrane. It localises to the cytoplasmic vesicle. The protein resides in the COPI-coated vesicle membrane. It is found in the secreted. Its function is as follows. The coatomer is a cytosolic protein complex that binds to dilysine motifs and reversibly associates with Golgi non-clathrin-coated vesicles, which further mediate biosynthetic protein transport from the ER, via the Golgi up to the trans Golgi network. Coatomer complex is required for budding from Golgi membranes, and is essential for the retrograde Golgi-to-ER transport of dilysine-tagged proteins. In mammals, the coatomer can only be recruited by membranes associated to ADP-ribosylation factors (ARFs), which are small GTP-binding proteins; the complex also influences the Golgi structural integrity, as well as the processing, activity, and endocytic recycling of LDL receptors. In terms of biological role, xenin stimulates exocrine pancreatic secretion. It inhibits pentagastrin-stimulated secretion of acid, to induce exocrine pancreatic secretion and to affect small and large intestinal motility. In the gut, xenin interacts with the neurotensin receptor. The chain is Coatomer subunit alpha (COPA) from Homo sapiens (Human).